The chain runs to 433 residues: MGFHIYEIKARQIIDSRGNPTVEADVILEDGTCGRSAVPSGASTGINEAVELRDGDKSVYMGKGVLKAIENIKNIIAPELEGMSALNQVAIDRKMLELDGTPTKEKLGANAILAVSMATAKAAAKYLGLKVYQYLGAYKANILPTPMCNIINGGAHSDNSVDFQEFMIMPIGAKTFSEAIRMSVEVFHTLKGILHGKGYATSVGDEGGFAPNLKSNEEACEMIIEAIKKAGYEPGKDIAIALDPATSELYDPKTKKYVLKWSTKEELTSEQMVEYWSKWVEKYPIISIEDGMAEEDWDGWKKLTDKIGHKIQLVGDDLFVTNTSFLKKGIEMGVANSILIKVNQIGTLTETFEAVEMAKKAGYTAIVSHRSGETEDTTIADLVVALGTGQIKTGSLSRTDRIAKYNQLIRIEEELETTAEYHGKNVFYSIKQK.

Residue Gln164 participates in (2R)-2-phosphoglycerate binding. The Proton donor role is filled by Glu206. Mg(2+)-binding residues include Asp243, Glu289, and Asp316. (2R)-2-phosphoglycerate contacts are provided by Lys341, Arg370, Ser371, and Lys392. Catalysis depends on Lys341, which acts as the Proton acceptor.

It belongs to the enolase family. Mg(2+) serves as cofactor.

It localises to the cytoplasm. The protein resides in the secreted. The protein localises to the cell surface. The catalysed reaction is (2R)-2-phosphoglycerate = phosphoenolpyruvate + H2O. It functions in the pathway carbohydrate degradation; glycolysis; pyruvate from D-glyceraldehyde 3-phosphate: step 4/5. Its function is as follows. Catalyzes the reversible conversion of 2-phosphoglycerate (2-PG) into phosphoenolpyruvate (PEP). It is essential for the degradation of carbohydrates via glycolysis. This Borreliella afzelii (strain PKo) (Borrelia afzelii) protein is Enolase.